Here is a 634-residue protein sequence, read N- to C-terminus: Replication protein E1 (634 aa).

The Nuclear localization signal signature appears at 85–87; that stretch reads KRK. Residues S91 and S95 each carry the phosphoserine; by host modification. The segment at 92–117 is disordered; the sequence is PRSSPLGDITNQNNTHSHSQANESQV. Polar residues predominate over residues 100–115; the sequence is ITNQNNTHSHSQANES. The tract at residues 172–338 is DNA-binding region; the sequence is CANVELNSIC…QTQLQHSFED (167 aa). Residues 437–587 enclose the SF3 helicase domain; sequence VNFMSFIQMF…FPFDNNGNAV (151 aa). ATP is bound at residue 463–470; sequence GPPNTGKS.

It belongs to the papillomaviridae E1 protein family. As to quaternary structure, can form hexamers. Interacts with E2 protein; this interaction increases E1 DNA binding specificity. Interacts with host DNA polymerase subunit POLA2. Interacts with host single stranded DNA-binding protein RPA1. Interacts with host TOP1; this interaction stimulates the enzymatic activity of TOP1. Post-translationally, phosphorylated.

The protein localises to the host nucleus. The catalysed reaction is Couples ATP hydrolysis with the unwinding of duplex DNA by translocating in the 3'-5' direction.. It catalyses the reaction ATP + H2O = ADP + phosphate + H(+). In terms of biological role, ATP-dependent DNA 3'-5' helicase required for initiation of viral DNA replication. It forms a complex with the viral E2 protein. The E1-E2 complex binds to the replication origin which contains binding sites for both proteins. During the initial step, a dimer of E1 interacts with a dimer of protein E2 leading to a complex that binds the viral origin of replication with high specificity. Then, a second dimer of E1 displaces the E2 dimer in an ATP-dependent manner to form the E1 tetramer. Following this, two E1 monomers are added to each half of the site, which results in the formation of two E1 trimers on the viral ori. Subsequently, two hexamers will be created. The double hexamer acts as a bi-directional helicase machinery and unwinds the viral DNA and then recruits the host DNA polymerase to start replication. The chain is Replication protein E1 from Homo sapiens (Human).